A 427-amino-acid chain; its full sequence is Enolase (427 aa).

Gln163 serves as a coordination point for (2R)-2-phosphoglycerate. Glu205 acts as the Proton donor in catalysis. Asp242, Glu285, and Asp312 together coordinate Mg(2+). Lys337, Arg366, Ser367, and Lys388 together coordinate (2R)-2-phosphoglycerate. Catalysis depends on Lys337, which acts as the Proton acceptor.

The protein belongs to the enolase family. It depends on Mg(2+) as a cofactor.

It localises to the cytoplasm. The protein resides in the secreted. It is found in the cell surface. The catalysed reaction is (2R)-2-phosphoglycerate = phosphoenolpyruvate + H2O. It participates in carbohydrate degradation; glycolysis; pyruvate from D-glyceraldehyde 3-phosphate: step 4/5. Its function is as follows. Catalyzes the reversible conversion of 2-phosphoglycerate (2-PG) into phosphoenolpyruvate (PEP). It is essential for the degradation of carbohydrates via glycolysis. The polypeptide is Enolase (Burkholderia multivorans (strain ATCC 17616 / 249)).